A 255-amino-acid chain; its full sequence is SLA class II histocompatibility antigen, DQ haplotype D alpha chain (255 aa).

The N-terminal stretch at 1–23 (MVPGRVLMWGALALTAVMSACGG) is a signal peptide. Residues 24-120 (EDIAADHVAS…QVPEVTVFPK (97 aa)) are alpha-1. The Extracellular portion of the chain corresponds to 24–217 (EDIAADHVAS…IPAPMSELTE (194 aa)). N-linked (GlcNAc...) asparagine glycans are attached at residues asparagine 104 and asparagine 144. Positions 113–205 (PEVTVFPKSP…LDKPLLKHWE (93 aa)) constitute an Ig-like C1-type domain. Residues 121–204 (SPVMLGQPNT…GLDKPLLKHW (84 aa)) form an alpha-2 region. The cysteines at positions 133 and 189 are disulfide-linked. The connecting peptide stretch occupies residues 205–217 (EPEIPAPMSELTE). The chain crosses the membrane as a helical span at residues 218 to 240 (TVVCALGLIVGLVGIVVGTVFII). Residues 241-255 (QGLRSGGPSRHQGSL) are Cytoplasmic-facing.

The protein belongs to the MHC class II family.

The protein resides in the membrane. The protein is SLA class II histocompatibility antigen, DQ haplotype D alpha chain of Sus scrofa (Pig).